The primary structure comprises 997 residues: Kinesin-like protein KIF19 (997 aa).

The Kinesin motor domain maps to 11–346 (QLTVALRIRP…LTYADRAKNI (336 aa)). Position 104-111 (104-111 (GPTGCGKT)) interacts with ATP. The stretch at 360–437 (HIAQYTSIIS…REQMDIRRQL (78 aa)) forms a coiled coil. Residues 468 to 491 (RARKWRDEHRKETYGKDDSEKDSD) are compositionally biased toward basic and acidic residues. The segment at 468–503 (RARKWRDEHRKETYGKDDSEKDSDTGDDQSDFIEPP) is disordered. A coiled-coil region spans residues 508–577 (ARETIQILEG…ELEIENTEMQ (70 aa)). Disordered stretches follow at residues 662–690 (NLTAEENLQEPDSDQESVRTFGSDNRNPI), 792–811 (GDRLQPMKERSNLSVHSMSE), and 848–890 (GGGS…SRSF). Composition is skewed to basic and acidic residues over residues 792–802 (GDRLQPMKERS) and 869–880 (QKLEKREESLEV). Residues 861–889 (HRTQKKQAQKLEKREESLEVKRRKKRSRS) adopt a coiled-coil conformation.

This sequence belongs to the TRAFAC class myosin-kinesin ATPase superfamily. Kinesin family.

The protein resides in the cytoplasm. It is found in the cytoskeleton. The protein localises to the cell projection. It localises to the cilium. In terms of biological role, plus end-directed microtubule-dependent motor protein that regulates the length of motile cilia by mediating depolymerization of microtubules at ciliary tips. The sequence is that of Kinesin-like protein KIF19 (kif19) from Xenopus laevis (African clawed frog).